The primary structure comprises 239 residues: MSTRRLPALLLPLALLAGCQNNQTLKEIGNAPAMSPIGSGLQFSQTPQMGMYPKQPKHMASGYSLWSDSQGALFKDLRALNIGDILTVNIQINDKADFDNETERNRTNASGLNWKAKAQILGWTPDADSSIKYGSDTDTQAKGKTKRSEKLTLLVAAVVTGILENGNLIISGSQEVRVNHEIRILNVGGIVRPQDVDAQNIISYERIAEARISYGGRGRLTEVQQPPVGQQVVDLFSPL.

An N-terminal signal peptide occupies residues 1 to 18; it reads MSTRRLPALLLPLALLAG. The N-palmitoyl cysteine moiety is linked to residue Cys-19. Cys-19 is lipidated: S-diacylglycerol cysteine.

It belongs to the FlgH family. As to quaternary structure, the basal body constitutes a major portion of the flagellar organelle and consists of four rings (L,P,S, and M) mounted on a central rod.

The protein localises to the cell outer membrane. The protein resides in the bacterial flagellum basal body. Its function is as follows. Assembles around the rod to form the L-ring and probably protects the motor/basal body from shearing forces during rotation. In Agrobacterium fabrum (strain C58 / ATCC 33970) (Agrobacterium tumefaciens (strain C58)), this protein is Flagellar L-ring protein (flgH).